Reading from the N-terminus, the 509-residue chain is Maturase K (509 aa).

This sequence belongs to the intron maturase 2 family. MatK subfamily.

The protein localises to the plastid. It localises to the chloroplast. Functionally, usually encoded in the trnK tRNA gene intron. Probably assists in splicing its own and other chloroplast group II introns. The polypeptide is Maturase K (Portulaca oleracea (Common purslane)).